Here is a 382-residue protein sequence, read N- to C-terminus: Intermediate transcription factor 3 large subunit (382 aa).

The protein belongs to the orthopoxvirus OPG150 family. As to quaternary structure, heterodimerizes with protein A8 to form the virus intermediate transcription factor (VITF)-3.

Acts with RNA polymerase to initiate transcription from intermediate gene promoters. This is Intermediate transcription factor 3 large subunit (OPG150) from Bos taurus (Bovine).